The sequence spans 139 residues: MAESAKTTLQLIFGNLAINIDEEEYQMVWGDVADMRNLFLERVPAKDISEIENLEKKDVKFIVDTLDKVLMSNNLYSLEDPAKNPPSLEELYNPTALLLDKVVTPECGSGYKFLVSLTEEDYTAFLFMMYYLEGFLSEM.

This is an uncharacterized protein from Ostreid herpesvirus 1 (isolate France) (OsHV-1).